A 198-amino-acid polypeptide reads, in one-letter code: Basic helix-loop-helix transcription factor amos (198 aa).

Positions 76–131 (EQQQHHLQANPLGKNQGRSPRYWNKQQRSKPYDKLSTSMSSSTSSASSSSSSSAGF) are disordered. Low complexity predominate over residues 111–129 (STSMSSSTSSASSSSSSSA). One can recognise a bHLH domain in the interval 138-190 (KRRLAANARERRRMNSLNDAFDKLRDVVPSLGHDRRLSKYETLQMAQAYIGDL).

As to quaternary structure, efficient DNA binding requires dimerization with another bHLH protein. Interacts with Daughterless (da). As to expression, during embryonic development, expression is seen in a small cluster of ectodermal cells during stage 10 which becomes restricted to 1 cell by stage 11. Expression is lost from this cell in the thorax and then the abdomen. Later expression is restricted to sensory organ precursors. Very transient expression was detected in distal leg disks at approximately 0-4 hours after puparium formation (APF), correlating with the anlage of the innervated tarsal claw.

The protein localises to the nucleus. In terms of biological role, transcription factor involved in early neurogenesis; sensillum basiconica formation and maybe sensillum trichodea development. Promotes multiple dendritic (MD) neuron formation. Required for olfactory sensilla; regulated by lozenge (lz). The protein is Basic helix-loop-helix transcription factor amos (amos) of Drosophila melanogaster (Fruit fly).